The chain runs to 67 residues: MMSKLGVVLTICLLPFPLTALPMDGDQPADLPALRTQDFEPERSPWFDPVKRCCSQDCRVCIPCCPY.

The N-terminal stretch at 1 to 20 (MMSKLGVVLTICLLPFPLTA) is a signal peptide. Residues 21 to 50 (LPMDGDQPADLPALRTQDFEPERSPWFDPV) constitute a propeptide that is removed on maturation. 3 disulfides stabilise this stretch: Cys53–Cys65, Cys54–Cys61, and Cys58–Cys64. Pro63 is modified (4-hydroxyproline).

Belongs to the conotoxin M superfamily. Expressed by the venom duct.

The protein localises to the secreted. In Conus ventricosus (Mediterranean cone), this protein is Conotoxin VnMMSK-03.